The following is a 283-amino-acid chain: GTPase Era (283 aa).

Residues 7-175 (YCGHVIIVGK…KNIIKSYLPE (169 aa)) form the Era-type G domain. The tract at residues 15–22 (GKANVGKS) is G1. 15-22 (GKANVGKS) provides a ligand contact to GTP. The G2 stretch occupies residues 41 to 45 (NTTQS). The segment at 62–65 (DTPG) is G3. GTP contacts are provided by residues 62 to 66 (DTPGV) and 124 to 127 (NKID). The segment at 124 to 127 (NKID) is G4. A G5 region spans residues 154–156 (ISA). The KH type-2 domain maps to 198-283 (IREQLILFLG…HLVLWVKDKN (86 aa)).

This sequence belongs to the TRAFAC class TrmE-Era-EngA-EngB-Septin-like GTPase superfamily. Era GTPase family. Monomer.

The protein localises to the cytoplasm. Its subcellular location is the cell membrane. Its function is as follows. An essential GTPase that binds both GDP and GTP, with rapid nucleotide exchange. Plays a role in 16S rRNA processing and 30S ribosomal subunit biogenesis and possibly also in cell cycle regulation and energy metabolism. This Buchnera aphidicola subsp. Acyrthosiphon pisum (strain APS) (Acyrthosiphon pisum symbiotic bacterium) protein is GTPase Era.